The chain runs to 248 residues: Triosephosphate isomerase (248 aa).

Thr4 bears the Phosphothreonine mark. 2 residues coordinate substrate: Asn10 and Lys12. Ser71 is subject to Phosphoserine. Residue His95 is the Electrophile of the active site. The active-site Proton acceptor is the Glu165. The residue at position 215 (Ser215) is a Phosphoserine. A Glycyl lysine isopeptide (Lys-Gly) (interchain with G-Cter in ubiquitin) cross-link involves residue Lys223.

The protein belongs to the triosephosphate isomerase family. Homodimer.

It catalyses the reaction D-glyceraldehyde 3-phosphate = dihydroxyacetone phosphate. It participates in carbohydrate biosynthesis; gluconeogenesis. Its pathway is carbohydrate degradation; glycolysis; D-glyceraldehyde 3-phosphate from glycerone phosphate: step 1/1. The chain is Triosephosphate isomerase (TPI1) from Saccharomyces cerevisiae (strain ATCC 204508 / S288c) (Baker's yeast).